We begin with the raw amino-acid sequence, 386 residues long: Succinate--CoA ligase [ADP-forming] subunit beta (386 aa).

Positions 9–244 (KEILHKFNVP…YDEEVKEEIE (236 aa)) constitute an ATP-grasp domain. ATP contacts are provided by residues K46, 53 to 55 (GRG), E99, S102, and E107. Residues N199 and D213 each contribute to the Mg(2+) site. Substrate is bound by residues N264 and 321-323 (GIM).

It belongs to the succinate/malate CoA ligase beta subunit family. In terms of assembly, heterotetramer of two alpha and two beta subunits. Requires Mg(2+) as cofactor.

It carries out the reaction succinate + ATP + CoA = succinyl-CoA + ADP + phosphate. The enzyme catalyses GTP + succinate + CoA = succinyl-CoA + GDP + phosphate. It participates in carbohydrate metabolism; tricarboxylic acid cycle; succinate from succinyl-CoA (ligase route): step 1/1. Its function is as follows. Succinyl-CoA synthetase functions in the citric acid cycle (TCA), coupling the hydrolysis of succinyl-CoA to the synthesis of either ATP or GTP and thus represents the only step of substrate-level phosphorylation in the TCA. The beta subunit provides nucleotide specificity of the enzyme and binds the substrate succinate, while the binding sites for coenzyme A and phosphate are found in the alpha subunit. This Wolbachia pipientis subsp. Culex pipiens (strain wPip) protein is Succinate--CoA ligase [ADP-forming] subunit beta.